We begin with the raw amino-acid sequence, 308 residues long: Elongation factor Ts (308 aa).

The involved in Mg(2+) ion dislocation from EF-Tu stretch occupies residues 80 to 83 (TDFV).

The protein belongs to the EF-Ts family.

Its subcellular location is the cytoplasm. Associates with the EF-Tu.GDP complex and induces the exchange of GDP to GTP. It remains bound to the aminoacyl-tRNA.EF-Tu.GTP complex up to the GTP hydrolysis stage on the ribosome. In Allorhizobium ampelinum (strain ATCC BAA-846 / DSM 112012 / S4) (Agrobacterium vitis (strain S4)), this protein is Elongation factor Ts.